The primary structure comprises 290 residues: Ribosomal RNA small subunit methyltransferase A (290 aa).

N27, L29, G54, E75, D100, and N125 together coordinate S-adenosyl-L-methionine.

It belongs to the class I-like SAM-binding methyltransferase superfamily. rRNA adenine N(6)-methyltransferase family. RsmA subfamily.

It localises to the cytoplasm. The catalysed reaction is adenosine(1518)/adenosine(1519) in 16S rRNA + 4 S-adenosyl-L-methionine = N(6)-dimethyladenosine(1518)/N(6)-dimethyladenosine(1519) in 16S rRNA + 4 S-adenosyl-L-homocysteine + 4 H(+). Its function is as follows. Specifically dimethylates two adjacent adenosines (A1518 and A1519) in the loop of a conserved hairpin near the 3'-end of 16S rRNA in the 30S particle. May play a critical role in biogenesis of 30S subunits. The sequence is that of Ribosomal RNA small subunit methyltransferase A from Streptococcus pyogenes serotype M18 (strain MGAS8232).